The primary structure comprises 293 residues: Elongation factor Ts (293 aa).

The tract at residues 80–83 (TDFV) is involved in Mg(2+) ion dislocation from EF-Tu.

Belongs to the EF-Ts family.

It is found in the cytoplasm. Its function is as follows. Associates with the EF-Tu.GDP complex and induces the exchange of GDP to GTP. It remains bound to the aminoacyl-tRNA.EF-Tu.GTP complex up to the GTP hydrolysis stage on the ribosome. This chain is Elongation factor Ts, found in Janthinobacterium sp. (strain Marseille) (Minibacterium massiliensis).